Here is a 128-residue protein sequence, read N- to C-terminus: Fluoride-specific ion channel FluC (128 aa).

4 consecutive transmembrane segments (helical) span residues 7–27 (AVLL…LIAV), 34–54 (TGFP…IGMI), 70–90 (LLLA…MYEI), and 104–124 (LYLI…MALA). Na(+) is bound by residues G78 and T81.

This sequence belongs to the fluoride channel Fluc/FEX (TC 1.A.43) family.

The protein localises to the cell inner membrane. It catalyses the reaction fluoride(in) = fluoride(out). Na(+) is not transported, but it plays an essential structural role and its presence is essential for fluoride channel function. Fluoride-specific ion channel. Important for reducing fluoride concentration in the cell, thus reducing its toxicity. The polypeptide is Fluoride-specific ion channel FluC (Prosthecochloris aestuarii (strain DSM 271 / SK 413)).